The following is a 127-amino-acid chain: Fumarate reductase subunit C (127 aa).

3 helical membrane passes run 30–50 (ATVL…GSLV), 67–87 (LVIA…QTFF), and 107–127 (IIVL…LIVV).

It belongs to the FrdC family. Part of an enzyme complex containing four subunits: a flavoprotein (FrdA), an iron-sulfur protein (FrdB), and two hydrophobic anchor proteins (FrdC and FrdD).

It is found in the cell inner membrane. In terms of biological role, anchors the catalytic components of the fumarate reductase complex to the cell membrane, binds quinones. The protein is Fumarate reductase subunit C of Vibrio cholerae serotype O1 (strain ATCC 39541 / Classical Ogawa 395 / O395).